Reading from the N-terminus, the 213-residue chain is MPSLLLVVFILQFLLHIINTVGASTVNDLLWILYNKLPTPTSSSAQKAQKLKKEIVQLKRELGATSAQDNFSKWAKLDRQHNKAMAEFQKIDGSLRGHQTAFTSAVSTLRWLGTQGLRFVLQFWFAKSPMFWMPAGWLPFYVEWILSFPRAPLGSVSINVWGIACASMIALAAEGLAAVWVLATKRPTPIATEKKEAMAFAADQKSSGEKKEL.

Residues 1–4 are Lumenal-facing; sequence MPSL. The chain crosses the membrane as a helical span at residues 5-24; the sequence is LLVVFILQFLLHIINTVGAS. Over 25 to 110 the chain is Cytoplasmic; that stretch reads TVNDLLWILY…AFTSAVSTLR (86 aa). A coiled-coil region spans residues 41 to 68; it reads TSSSAQKAQKLKKEIVQLKRELGATSAQ. The chain crosses the membrane as a helical span at residues 111–131; the sequence is WLGTQGLRFVLQFWFAKSPMF. Residues 132–155 lie on the Lumenal side of the membrane; that stretch reads WMPAGWLPFYVEWILSFPRAPLGS. A helical transmembrane segment spans residues 156-172; it reads VSINVWGIACASMIALA. The Cytoplasmic portion of the chain corresponds to 173 to 213; the sequence is AEGLAAVWVLATKRPTPIATEKKEAMAFAADQKSSGEKKEL.

It belongs to the WRB/GET1 family. In terms of assembly, interacts with GET3.

It is found in the endoplasmic reticulum membrane. Its function is as follows. Required for the post-translational delivery of tail-anchored (TA) proteins to the endoplasmic reticulum. Acts as a membrane receptor for soluble GET3, which recognizes and selectively binds the transmembrane domain of TA proteins in the cytosol. The sequence is that of Protein GET1 from Phaeosphaeria nodorum (strain SN15 / ATCC MYA-4574 / FGSC 10173) (Glume blotch fungus).